The chain runs to 234 residues: ATP synthase subunit a 1 (234 aa).

Transmembrane regions (helical) follow at residues 20-40, 76-96, 105-125, 162-184, and 195-215; these read ETVV…ILLT, LLPL…LGVI, DLSV…AYGV, LFGN…GFLA, and EALV…AGAM.

The protein belongs to the ATPase A chain family. F-type ATPases have 2 components, CF(1) - the catalytic core - and CF(0) - the membrane proton channel. CF(1) has five subunits: alpha(3), beta(3), gamma(1), delta(1), epsilon(1). CF(0) has three main subunits: a(1), b(2) and c(9-12). The alpha and beta chains form an alternating ring which encloses part of the gamma chain. CF(1) is attached to CF(0) by a central stalk formed by the gamma and epsilon chains, while a peripheral stalk is formed by the delta and b chains.

The protein resides in the cell inner membrane. Key component of the proton channel; it plays a direct role in the translocation of protons across the membrane. The chain is ATP synthase subunit a 1 from Hahella chejuensis (strain KCTC 2396).